We begin with the raw amino-acid sequence, 178 residues long: MSRVGKLPIEIPVGVEVCVNGRTVSITGPKGSLYLDIAEQIGVSVSDGKVLVSRSDDSRTARALHGLTRALIANNVHGVLHGYTKTLEIVGTGYRVSKKGENLELALGFSHPVFVDPVPGVSFGVEGNSKIIVSGIDKQAVGEAAASIRKLSKPEPYKGKGIRYSDEIVRRKVGKAGK.

This sequence belongs to the universal ribosomal protein uL6 family. As to quaternary structure, part of the 50S ribosomal subunit.

Its function is as follows. This protein binds to the 23S rRNA, and is important in its secondary structure. It is located near the subunit interface in the base of the L7/L12 stalk, and near the tRNA binding site of the peptidyltransferase center. The sequence is that of Large ribosomal subunit protein uL6 from Tropheryma whipplei (strain TW08/27) (Whipple's bacillus).